The sequence spans 198 residues: UPF0314 protein Atu8092 (198 aa).

Helical transmembrane passes span 14–34 (LRWF…LYAM), 64–84 (WYTP…WLLF), and 150–170 (VPVW…GWLI).

The protein belongs to the UPF0314 family.

It is found in the cell membrane. The polypeptide is UPF0314 protein Atu8092 (Agrobacterium fabrum (strain C58 / ATCC 33970) (Agrobacterium tumefaciens (strain C58))).